The following is a 126-amino-acid chain: Holo-[acyl-carrier-protein] synthase (126 aa).

Mg(2+) contacts are provided by Asp9 and Glu58.

The protein belongs to the P-Pant transferase superfamily. AcpS family. Mg(2+) serves as cofactor.

It is found in the cytoplasm. The enzyme catalyses apo-[ACP] + CoA = holo-[ACP] + adenosine 3',5'-bisphosphate + H(+). Transfers the 4'-phosphopantetheine moiety from coenzyme A to a Ser of acyl-carrier-protein. This Sodalis glossinidius (strain morsitans) protein is Holo-[acyl-carrier-protein] synthase.